Here is a 533-residue protein sequence, read N- to C-terminus: Heterogeneous nuclear ribonucleoprotein Q (533 aa).

Alanine 2 is subject to N-acetylalanine. The residue at position 69 (serine 69) is a Phosphoserine. 3 RRM domains span residues 72–151 (TEIF…ISVA), 153–235 (NRLF…WADP), and 248–318 (KVLF…FAKP). Lysine 78 participates in a covalent cross-link: Glycyl lysine isopeptide (Lys-Gly) (interchain with G-Cter in SUMO2). An N6-acetyllysine modification is found at lysine 131. Lysine 273 is modified (N6-acetyllysine). At tyrosine 283 the chain carries Phosphotyrosine. The segment at 310–471 (NIEIVFAKPP…GARGGRGGNV (162 aa)) is interaction with APOBEC1. Arginine 354 carries the post-translational modification Asymmetric dimethylarginine; by PRMT1; alternate. Omega-N-methylarginine; by PRMT1; alternate is present on arginine 354. 6 repeat units span residues 358-360 (RGG), 361-363 (RGG), 370-374 (YYGYE), 379-382 (YYGY), 388-390 (RGG), and 395-398 (YYGY). Positions 358-469 (RGGRGGYGYP…VRGARGGRGG (112 aa)) are 8 X 3 AA repeats of R-G-G. The tract at residues 370–398 (YYGYEDYYDYYGYDYHNYRGGYEDPYYGY) is 3 X 4 AA repeats of Y-Y-G-Y. The residue at position 406 (arginine 406) is an Omega-N-methylarginine; by PRMT1. The interval 407-533 (GRGGRGARGA…YQDTFGQQWK (127 aa)) is disordered. One copy of the 1-4 repeat lies at 408–410 (RGG). Low complexity predominate over residues 414 to 432 (RGAAPSRGRGAAPPRGRAG). Residue arginine 420 is modified to Asymmetric dimethylarginine; by PRMT1. Arginine 428 is modified (asymmetric dimethylarginine; by PRMT1; alternate). Omega-N-methylarginine; by PRMT1; alternate is present on arginine 428. An interaction with SMN region spans residues 428–459 (RGRAGYSQRGGPGSARGVRGARGGAQQQRGRG). An Asymmetric dimethylarginine; alternate modification is found at arginine 436. Residue arginine 436 is modified to Omega-N-methylarginine; alternate. The stretch at 436–438 (RGG) is one 1-5 repeat. Residues arginine 446 and arginine 449 each carry the asymmetric dimethylarginine; by PRMT1; alternate modification. Arginine 446 and arginine 449 each carry omega-N-methylarginine; by PRMT1; alternate. 3 tandem repeats follow at residues 449–451 (RGG), 464–466 (RGG), and 467–469 (RGG). The span at 460–472 (VRGARGGRGGNVG) shows a compositional bias: gly residues. The short motif at 474–488 (KRKADGYNQPDSKRR) is the Bipartite nuclear localization signal element. Over residues 490–505 (TNNQNWGSQPIAQQPL) the composition is skewed to polar residues. Phosphoserine is present on serine 497. A Glycyl lysine isopeptide (Lys-Gly) (interchain with G-Cter in SUMO2) cross-link involves residue lysine 517.

As to quaternary structure, identified in a histone pre-mRNA complex, at least composed of ERI1, LSM11, SLBP, SNRPB, SYNCRIP and YBX1. Identified in the spliceosome C complex. Component of the coding region determinant (CRD)-mediated complex, composed of DHX9, HNRNPU, IGF2BP1, SYNCRIP and YBX1. Identified in a mRNP complex, at least composed of DHX9, DDX3X, ELAVL1, HNRNPU, IGF2BP1, ILF3, PABPC1, PCBP2, PTBP2, STAU1, STAU2, SYNCRIP and YBX1. Identified in a mRNP granule complex, at least composed of ACTB, ACTN4, DHX9, ERG, HNRNPA1, HNRNPA2B1, HNRNPAB, HNRNPD, HNRNPL, HNRNPR, HNRNPU, HSPA1, HSPA8, IGF2BP1, ILF2, ILF3, NCBP1, NCL, PABPC1, PABPC4, PABPN1, RPLP0, RPS3, RPS3A, RPS4X, RPS8, RPS9, SYNCRIP, YBX1 and untranslated mRNAs. Component of the APOB mRNA editosome. Interacts with APOBEC1 and A1CF. Part of a complex associated with the FOS mCRD domain and consisting of PABPC1, PAIP1, CSDE1/UNR, HNRPD and SYNCRIP. Interacts with HNRPR, SMN, POLR2A hyperphosphorylated C-terminal domain, minute virus of mice (MVM) NS1 protein and through its C-terminal domain with SYT7, SYT8 and SYT9. The non-phosphorylated and phosphorylated forms are colocalized with PAIP1 in polysomes. Interacts with GTPBP1. Interacts with HABP4. Post-translationally, phosphorylated on tyrosine. The membrane-bound form found in microsomes is phosphorylated in vitro by insulin receptor tyrosine kinase (INSR). Phosphorylation is inhibited upon binding to RNA, whereas the cytoplasmic form is poorly phosphorylated.

It is found in the nucleus. Its subcellular location is the nucleoplasm. The protein resides in the cytoplasm. The protein localises to the microsome. Functionally, heterogenous nuclear ribonucleoprotein (hnRNP) implicated in mRNA processing mechanisms. Component of the CRD-mediated complex that promotes MYC mRNA stability. Is associated in vitro with pre-mRNA, splicing intermediates and mature mRNA protein complexes. Binds to apoB mRNA AU-rich sequences. Part of the APOB mRNA editosome complex and may modulate the postranscriptional C to U RNA-editing of the APOB mRNA through either by binding to A1CF (APOBEC1 complementation factor), to APOBEC1 or to RNA itself. May be involved in translationally coupled mRNA turnover. Implicated with other RNA-binding proteins in the cytoplasmic deadenylation/translational and decay interplay of the FOS mRNA mediated by the major coding-region determinant of instability (mCRD) domain. Interacts in vitro preferentially with poly(A) and poly(U) RNA sequences. May be involved in cytoplasmic vesicle-based mRNA transport through interaction with synaptotagmins. This Rattus norvegicus (Rat) protein is Heterogeneous nuclear ribonucleoprotein Q (Syncrip).